The primary structure comprises 165 residues: MIRGFFLILLFLLLAFFSENYVRSLEKLKEEITVRSELKGVEIQLYGEKGLEWRIQGKTLTYADNQVVINEPVIRTQDYTITSEKLYMNKKTRKGRLEGNVEIRGPNLYLRTTNAYIDLVKNISWGYNELILRKDTNVIKGRGFKIFFKPFKVQINEVESIHTTS.

A signal peptide spans 1–17 (MIRGFFLILLFLLLAFF).

This is an uncharacterized protein from Aquifex aeolicus (strain VF5).